A 701-amino-acid polypeptide reads, in one-letter code: Ribosomal RNA large subunit methyltransferase K/L (701 aa).

The region spanning 44–155 (QAYKICLWSR…SDKLTVYLDL (112 aa)) is the THUMP domain.

This sequence belongs to the methyltransferase superfamily. RlmKL family.

It is found in the cytoplasm. It catalyses the reaction guanosine(2445) in 23S rRNA + S-adenosyl-L-methionine = N(2)-methylguanosine(2445) in 23S rRNA + S-adenosyl-L-homocysteine + H(+). The catalysed reaction is guanosine(2069) in 23S rRNA + S-adenosyl-L-methionine = N(2)-methylguanosine(2069) in 23S rRNA + S-adenosyl-L-homocysteine + H(+). In terms of biological role, specifically methylates the guanine in position 2445 (m2G2445) and the guanine in position 2069 (m7G2069) of 23S rRNA. The protein is Ribosomal RNA large subunit methyltransferase K/L of Pseudoalteromonas atlantica (strain T6c / ATCC BAA-1087).